A 231-amino-acid polypeptide reads, in one-letter code: Ribosomal RNA small subunit methyltransferase G (231 aa).

S-adenosyl-L-methionine is bound by residues Gly75, 125-126 (GE), and Arg140. A compositionally biased stretch (acidic residues) spans 204–213 (AEAEEGDSPE). The tract at residues 204–231 (AEAEEGDSPEAADASRGVILELTKKNKG) is disordered.

It belongs to the methyltransferase superfamily. RNA methyltransferase RsmG family.

It is found in the cytoplasm. In terms of biological role, specifically methylates the N7 position of a guanine in 16S rRNA. The polypeptide is Ribosomal RNA small subunit methyltransferase G (Rhodopirellula baltica (strain DSM 10527 / NCIMB 13988 / SH1)).